Consider the following 252-residue polypeptide: Imidazole glycerol phosphate synthase subunit HisF (252 aa).

Residues aspartate 11 and aspartate 130 contribute to the active site.

This sequence belongs to the HisA/HisF family. Heterodimer of HisH and HisF.

It localises to the cytoplasm. The enzyme catalyses 5-[(5-phospho-1-deoxy-D-ribulos-1-ylimino)methylamino]-1-(5-phospho-beta-D-ribosyl)imidazole-4-carboxamide + L-glutamine = D-erythro-1-(imidazol-4-yl)glycerol 3-phosphate + 5-amino-1-(5-phospho-beta-D-ribosyl)imidazole-4-carboxamide + L-glutamate + H(+). The protein operates within amino-acid biosynthesis; L-histidine biosynthesis; L-histidine from 5-phospho-alpha-D-ribose 1-diphosphate: step 5/9. Functionally, IGPS catalyzes the conversion of PRFAR and glutamine to IGP, AICAR and glutamate. The HisF subunit catalyzes the cyclization activity that produces IGP and AICAR from PRFAR using the ammonia provided by the HisH subunit. In Desulforamulus reducens (strain ATCC BAA-1160 / DSM 100696 / MI-1) (Desulfotomaculum reducens), this protein is Imidazole glycerol phosphate synthase subunit HisF.